The following is a 335-amino-acid chain: Trans-1,2-dihydrobenzene-1,2-diol dehydrogenase (335 aa).

This sequence belongs to the Gfo/Idh/MocA family. As to quaternary structure, homodimer.

The catalysed reaction is (1R,2R)-1,2-dihydrobenzene-1,2-diol + NADP(+) = catechol + NADPH + H(+). It carries out the reaction D-xylose + NADP(+) = D-xylono-1,5-lactone + NADPH + H(+). This Bos taurus (Bovine) protein is Trans-1,2-dihydrobenzene-1,2-diol dehydrogenase (DHDH).